The sequence spans 63 residues: Translational regulator CsrA (63 aa).

It belongs to the CsrA/RsmA family. As to quaternary structure, homodimer; the beta-strands of each monomer intercalate to form a hydrophobic core, while the alpha-helices form wings that extend away from the core.

It localises to the cytoplasm. Functionally, a key translational regulator that binds mRNA to regulate translation initiation and/or mRNA stability. Mediates global changes in gene expression, shifting from rapid growth to stress survival by linking envelope stress, the stringent response and the catabolite repression systems. Usually binds in the 5'-UTR; binding at or near the Shine-Dalgarno sequence prevents ribosome-binding, repressing translation, binding elsewhere in the 5'-UTR can activate translation and/or stabilize the mRNA. Its function is antagonized by small RNA(s). The chain is Translational regulator CsrA from Haemophilus influenzae (strain 86-028NP).